The sequence spans 90 residues: DNA-binding protein HU-alpha (90 aa).

This sequence belongs to the bacterial histone-like protein family. Heterodimer of an alpha and a beta chain.

In terms of biological role, histone-like DNA-binding protein which is capable of wrapping DNA to stabilize it, and thus to prevent its denaturation under extreme environmental conditions. The polypeptide is DNA-binding protein HU-alpha (hupA) (Serratia marcescens).